Consider the following 255-residue polypeptide: 5'-nucleotidase SurE (255 aa).

Residues D8, D9, S40, and N93 each coordinate a divalent metal cation.

It belongs to the SurE nucleotidase family. A divalent metal cation serves as cofactor.

It is found in the cytoplasm. It catalyses the reaction a ribonucleoside 5'-phosphate + H2O = a ribonucleoside + phosphate. Its function is as follows. Nucleotidase that shows phosphatase activity on nucleoside 5'-monophosphates. This chain is 5'-nucleotidase SurE, found in Rhodopseudomonas palustris (strain BisA53).